We begin with the raw amino-acid sequence, 294 residues long: NADH-cytochrome b5 reductase 1 (294 aa).

A helical transmembrane segment spans residues 18–38; the sequence is PFIVFATVATIISAFIGYYFL. The region spanning 51–154 is the FAD-binding FR-type domain; the sequence is DEFQKFPLIE…RGPKGFFTYT (104 aa). Residues 134-149 and 160-192 each bind FAD; these read AGKN…GPKG and SFGM…KIHL.

It belongs to the flavoprotein pyridine nucleotide cytochrome reductase family. As to quaternary structure, monomer. Component of the 2-(3-amino-3-carboxypropyl)histidine synthase complex composed of DPH1, DPH2, DPH3 and a NADH-dependent reductase, predominantly CBR1. Requires FAD as cofactor.

Its subcellular location is the mitochondrion outer membrane. The enzyme catalyses 2 Fe(III)-[cytochrome b5] + NADH = 2 Fe(II)-[cytochrome b5] + NAD(+) + H(+). It carries out the reaction 2 Fe(3+)-[Dph3] + NADH = 2 Fe(2+)-[Dph3] + NAD(+) + H(+). It functions in the pathway protein modification; peptidyl-diphthamide biosynthesis. In terms of biological role, NADH-dependent reductase for DPH3 and cytochrome b5. Required for the first step of diphthamide biosynthesis, a post-translational modification of histidine which occurs in elongation factor 2. DPH1 and DPH2 transfer a 3-amino-3-carboxypropyl (ACP) group from S-adenosyl-L-methionine (SAM) to a histidine residue, the reaction is assisted by a reduction system comprising DPH3 and a NADH-dependent reductase, predominantly CBR1. By reducing DPH3, also involved in the formation of the tRNA wobble base modification mcm5s 2U (5-methoxycarbonylmethyl-2-thiouridine), mediated by the elongator complex. The cytochrome b5/NADH cytochrome b5 reductase electron transfer system supports the catalytic activity of several sterol biosynthetic enzymes. The polypeptide is NADH-cytochrome b5 reductase 1 (CBR1) (Candida albicans (strain SC5314 / ATCC MYA-2876) (Yeast)).